We begin with the raw amino-acid sequence, 256 residues long: Deoxyribose-phosphate aldolase (256 aa).

Catalysis depends on D102, which acts as the Proton donor/acceptor. The active-site Schiff-base intermediate with acetaldehyde is the K165. The active-site Proton donor/acceptor is the K197.

The protein belongs to the DeoC/FbaB aldolase family. DeoC type 2 subfamily.

Its subcellular location is the cytoplasm. The enzyme catalyses 2-deoxy-D-ribose 5-phosphate = D-glyceraldehyde 3-phosphate + acetaldehyde. Its pathway is carbohydrate degradation; 2-deoxy-D-ribose 1-phosphate degradation; D-glyceraldehyde 3-phosphate and acetaldehyde from 2-deoxy-alpha-D-ribose 1-phosphate: step 2/2. Functionally, catalyzes a reversible aldol reaction between acetaldehyde and D-glyceraldehyde 3-phosphate to generate 2-deoxy-D-ribose 5-phosphate. This chain is Deoxyribose-phosphate aldolase, found in Shewanella sp. (strain W3-18-1).